The chain runs to 543 residues: Ipecac alkaloid beta-glucosidase 2 (543 aa).

A beta-D-glucoside is bound by residues Gln-36, His-140, 185–186 (NE), Tyr-350, Glu-422, Trp-471, and Phe-487. The Proton donor role is filled by Glu-186. The active-site Nucleophile is Glu-422.

The protein belongs to the glycosyl hydrolase 1 family.

It is found in the cytoplasm. Its subcellular location is the cytosol. The enzyme catalyses deacetylipecoside + H2O = deacetylipecoside aglycone + D-glucose. The catalysed reaction is deacetylisoipecoside + H2O = deacetylisoipecoside aglycone + D-glucose. It participates in alkaloid biosynthesis. Functionally, beta-glucosidase catalyzing deglucosylation on N-deacetylisoipecoside and N-deacetylipecoside. The polypeptide is Ipecac alkaloid beta-glucosidase 2 (Carapichea ipecacuanha (Ipecac)).